A 178-amino-acid chain; its full sequence is Cytochrome b6-f complex iron-sulfur subunit (178 aa).

Residues 20 to 42 (LLTFGTATGVALGALYPVANFFM) form a helical membrane-spanning segment. The Rieske domain maps to 71–161 (NHPAGDRSLV…IDIDDDNVLV (91 aa)). 4 residues coordinate [2Fe-2S] cluster: Cys107, His109, Cys125, and His128. An intrachain disulfide couples Cys112 to Cys127.

Belongs to the Rieske iron-sulfur protein family. As to quaternary structure, the 4 large subunits of the cytochrome b6-f complex are cytochrome b6, subunit IV (17 kDa polypeptide, PetD), cytochrome f and the Rieske protein, while the 4 small subunits are PetG, PetL, PetM and PetN. The complex functions as a dimer. Requires [2Fe-2S] cluster as cofactor.

It localises to the cellular thylakoid membrane. The catalysed reaction is 2 oxidized [plastocyanin] + a plastoquinol + 2 H(+)(in) = 2 reduced [plastocyanin] + a plastoquinone + 4 H(+)(out). Functionally, component of the cytochrome b6-f complex, which mediates electron transfer between photosystem II (PSII) and photosystem I (PSI), cyclic electron flow around PSI, and state transitions. This Prochlorococcus marinus (strain SARG / CCMP1375 / SS120) protein is Cytochrome b6-f complex iron-sulfur subunit.